Here is a 215-residue protein sequence, read N- to C-terminus: Cytochrome b6 (215 aa).

Residues 32 to 52 (IFYCLGGITLTCFIIQVATGF) form a helical membrane-spanning segment. Residue C35 coordinates heme c. H86 and H100 together coordinate heme b. A run of 3 helical transmembrane segments spans residues 90–110 (ASMM…TGGF), 116–136 (LTWV…VTGY), and 186–206 (LHTF…FLMI). The heme b site is built by H187 and H202.

The protein belongs to the cytochrome b family. PetB subfamily. The 4 large subunits of the cytochrome b6-f complex are cytochrome b6, subunit IV (17 kDa polypeptide, PetD), cytochrome f and the Rieske protein, while the 4 small subunits are PetG, PetL, PetM and PetN. The complex functions as a dimer. Requires heme b as cofactor. Heme c serves as cofactor.

Its subcellular location is the plastid. It localises to the chloroplast thylakoid membrane. Functionally, component of the cytochrome b6-f complex, which mediates electron transfer between photosystem II (PSII) and photosystem I (PSI), cyclic electron flow around PSI, and state transitions. The sequence is that of Cytochrome b6 from Zygnema circumcarinatum (Green alga).